A 757-amino-acid polypeptide reads, in one-letter code: RNA-directed RNA polymerase catalytic subunit (757 aa).

The tract at residues 50–82 (SEKGKWTTNTETGAPQLNPIDGPLPEDNEPSGY) is disordered. Polar residues predominate over residues 55-64 (WTTNTETGAP). Short sequence motifs (nuclear localization signal) lie at residues 187–195 (RKRRVRDNM) and 203–216 (RTIG…NKRS). Residues 249–256 (RGFVYFVE) are promoter-binding site. The RdRp catalytic domain maps to 286 to 483 (VRKMMTNSQD…GINMSKKKSY (198 aa)).

Belongs to the influenza viruses polymerase PB1 family. As to quaternary structure, influenza RNA polymerase is composed of three subunits: PB1, PB2 and PA. Interacts (via N-terminus) with PA (via C-terminus). Interacts (via C-terminus) with PB2 (via N-terminus); this interaction is essential for transcription initiation. In terms of processing, phosphorylated by host PRKCA.

The protein localises to the host nucleus. Its subcellular location is the host cytoplasm. It carries out the reaction RNA(n) + a ribonucleoside 5'-triphosphate = RNA(n+1) + diphosphate. RNA-dependent RNA polymerase which is responsible for replication and transcription of virus RNA segments. The transcription of viral mRNAs occurs by a unique mechanism called cap-snatching. 5' methylated caps of cellular mRNAs are cleaved after 10-13 nucleotides by PA. In turn, these short capped RNAs are used as primers by PB1 for transcription of viral mRNAs. During virus replication, PB1 initiates RNA synthesis and copy vRNA into complementary RNA (cRNA) which in turn serves as a template for the production of more vRNAs. The sequence is that of RNA-directed RNA polymerase catalytic subunit from Influenza A virus (strain A/Port Chalmers/1/1973 H3N2).